A 110-amino-acid chain; its full sequence is METIAKHRYARTSAQKARLVADLIRGKKVAAALEILTYTNKKAAALVKKVLESAIANAEHNDGADIDDLKVTKIFVDEGPSMKRVMPRAKGRADRILKRTSHITVVVSDR.

This sequence belongs to the universal ribosomal protein uL22 family. Part of the 50S ribosomal subunit.

Functionally, this protein binds specifically to 23S rRNA; its binding is stimulated by other ribosomal proteins, e.g. L4, L17, and L20. It is important during the early stages of 50S assembly. It makes multiple contacts with different domains of the 23S rRNA in the assembled 50S subunit and ribosome. The globular domain of the protein is located near the polypeptide exit tunnel on the outside of the subunit, while an extended beta-hairpin is found that lines the wall of the exit tunnel in the center of the 70S ribosome. The sequence is that of Large ribosomal subunit protein uL22 from Mannheimia succiniciproducens (strain KCTC 0769BP / MBEL55E).